The following is a 578-amino-acid chain: MAVSWRSWLANEGVKHLCLLIWLSLNVLLFWKTFLLYNQGPEYYYIHQMLGLGLCLSRASASVLNLNCSLILLPMCRTVLAYLRGSQKVPSRRTRRLLDKSKTLHITCGVTICIFSGVHVAAHLVNALNFSVNYSEDFLELNAARYQNEDPRKLLFTTIPGLTGVCMVVVLFLMVTASTYAIRVSNYDIFWYTHNLFFVFYMLLLLHVSGGLLKYQTNVDTHPPGCISLNQTSSQNMSIPDYVSEHFHGSLPRGFSKLEDRYQKTLVKICLEEPKFQAHFPQTWIWISGPLCLYCAERLYRCIRSNKPVTIISVINHPSDVMELRMIKENFKARPGQYIILHCPSVSALENHPFTLTMCPTETKATFGVHFKVVGDWTERFRDLLLPPSSQDSEILPFIHSRNYPKLYIDGPFGSPFEESLNYEVSLCVAGGIGVTPFASILNTLLDDWKPYKLRRLYFIWVCRDIQSFQWFADLLCVLHNKFWQENRPDFVNIQLYLSQTDGIQKIIGEKYHTLNSRLFIGRPRWKLLFDEIAKCNRGKTVGVFCCGPSSISKTLHSLSNRNNSYGTKFEYNKESFS.

Residues 1-16 (MAVSWRSWLANEGVKH) lie on the Cytoplasmic side of the membrane. Residues 17–37 (LCLLIWLSLNVLLFWKTFLLY) form a helical membrane-spanning segment. The Extracellular portion of the chain corresponds to 38 to 62 (NQGPEYYYIHQMLGLGLCLSRASAS). The region spanning 58 to 303 (RASASVLNLN…YCAERLYRCI (246 aa)) is the Ferric oxidoreductase domain. The helical transmembrane segment at 63-83 (VLNLNCSLILLPMCRTVLAYL) threads the bilayer. Residues 84–104 (RGSQKVPSRRTRRLLDKSKTL) lie on the Cytoplasmic side of the membrane. Residues 105 to 125 (HITCGVTICIFSGVHVAAHLV) form a helical membrane-spanning segment. Residues 126 to 154 (NALNFSVNYSEDFLELNAARYQNEDPRKL) lie on the Extracellular side of the membrane. Residue Asn-133 is glycosylated (N-linked (GlcNAc...) asparagine). Residues 155 to 175 (LFTTIPGLTGVCMVVVLFLMV) form a helical membrane-spanning segment. Residues 176 to 188 (TASTYAIRVSNYD) lie on the Cytoplasmic side of the membrane. A helical transmembrane segment spans residues 189-209 (IFWYTHNLFFVFYMLLLLHVS). Residues 210–424 (GGLLKYQTNV…SPFEESLNYE (215 aa)) are Extracellular-facing. An E-loop; essential for H2O2 generating catalytic activity region spans residues 218–273 (NVDTHPPGCISLNQTSSQNMSIPDYVSEHFHGSLPRGFSKLEDRYQKTLVKICLEE). An N-linked (GlcNAc...) asparagine glycan is attached at Asn-230. The mediates interaction with TLR4 stretch occupies residues 248-575 (HGSLPRGFSK…YGTKFEYNKE (328 aa)). Positions 304–419 (RSNKPVTIIS…DGPFGSPFEE (116 aa)) constitute an FAD-binding FR-type domain. Residues 425 to 445 (VSLCVAGGIGVTPFASILNTL) form a helical membrane-spanning segment. Residues 446 to 578 (LDDWKPYKLR…KFEYNKESFS (133 aa)) are Cytoplasmic-facing.

Interacts with, relocalizes and stabilizes CYBA/p22phox. Interacts with TLR4. Interacts with protein disulfide isomerase. Interacts with PPP1R15A. Interacts with LRRC8A; this interaction prevents the ubiquitin-mediated degradation of LRRC8A. Heme is required as a cofactor. N-glycosylation is required for the function. As to expression, EXpressed in brain, in all layers of the cerebellum, in pyramidal cells of the Ammon horn and in Purkinje cells (at protein level). Expressed in osteoclasts, leukocytes, kidney, liver and lung.

It is found in the cytoplasm. It localises to the endoplasmic reticulum membrane. The protein localises to the cell membrane. The protein resides in the cell junction. Its subcellular location is the focal adhesion. It is found in the nucleus. The catalysed reaction is NADPH + 2 O2 = 2 superoxide + NADP(+) + H(+). It carries out the reaction NADPH + O2 + H(+) = H2O2 + NADP(+). Activated by insulin. Inhibited by diphenylene iodonium. Inhibited by plumbagin. Activated by phorbol 12-myristate 13-acetate (PMA). In terms of biological role, NADPH oxidase that catalyzes predominantly the reduction of oxygen to H2O2. Can also catalyze to a smaller extent, the reduction of oxygen to superoxide. May function as an oxygen sensor regulating the KCNK3/TASK-1 potassium channel and HIF1A activity. May regulate insulin signaling cascade. May play a role in apoptosis, bone resorption and lipolysaccharide-mediated activation of NFKB. May produce superoxide in the nucleus and play a role in regulating gene expression upon cell stimulation. Promotes ferroptosis, reactive oxygen species production and reduced glutathione (GSH) levels by activating NLRP3 inflammasome activation and cytokine release. In Mus musculus (Mouse), this protein is NADPH oxidase 4 (Nox4).